We begin with the raw amino-acid sequence, 463 residues long: D(5)-like dopamine receptor (463 aa).

Over 1–39 (MENFYNETEPTEPRGGVDPLRVVTAAEDVPAPVGGVSVR) the chain is Extracellular. An N-linked (GlcNAc...) asparagine glycan is attached at asparagine 6. Residues 40 to 65 (ALTGCVLCALIVSTLLGNTLVCAAVI) traverse the membrane as a helical segment. Residues 66–76 (KFRHLRSKVTN) are Cytoplasmic-facing. A helical transmembrane segment spans residues 77–103 (AFVVSLAVSDLFVAVLVMPWRAVSEVA). The Extracellular portion of the chain corresponds to 104 to 112 (GVWLFGRFC). Cysteine 112 and cysteine 194 are disulfide-bonded. A helical transmembrane segment spans residues 113-135 (DTWVAFDIMCSTASILNLCVISM). Residues 136-154 (DRYWAISNPFRYERRMTRR) lie on the Cytoplasmic side of the membrane. A helical transmembrane segment spans residues 155 to 180 (FAFLMIAVAWTLSVLISFIPVQLNWH). At 181 to 198 (RADNNSSAHEQGDCNASL) the chain is on the extracellular side. A helical membrane pass occupies residues 199-223 (NRTYAISSSLISFYIPVLIMVGTYT). Residues 224–273 (RIFRIAQTQIRRISSLERAAGQRAQNQSHRASTHDESALKTSFKRETKVL) are Cytoplasmic-facing. The chain crosses the membrane as a helical span at residues 274-301 (KTLSVIMGVFVFCWLPFFVLNCVVPFCD). The Extracellular portion of the chain corresponds to 302-315 (VDKVGEPPCVSDTT). The helical transmembrane segment at 316–337 (FNIFVWFGWANSSLNPVIYAFN) threads the bilayer. Over 338-463 (ADFRKAFTTI…PGQIQDLGDL (126 aa)) the chain is Cytoplasmic.

This sequence belongs to the G-protein coupled receptor 1 family.

The protein localises to the cell membrane. Functionally, receptor for dopamine. This Takifugu rubripes (Japanese pufferfish) protein is D(5)-like dopamine receptor (dl).